A 130-amino-acid chain; its full sequence is Glycine cleavage system H protein (130 aa).

The 83-residue stretch at 24-106 (TATVGITDFA…YGDGWMFKVK (83 aa)) folds into the Lipoyl-binding domain. N6-lipoyllysine is present on K65.

Belongs to the GcvH family. In terms of assembly, the glycine cleavage system is composed of four proteins: P, T, L and H. The cofactor is (R)-lipoate.

In terms of biological role, the glycine cleavage system catalyzes the degradation of glycine. The H protein shuttles the methylamine group of glycine from the P protein to the T protein. The chain is Glycine cleavage system H protein from Marinobacter nauticus (strain ATCC 700491 / DSM 11845 / VT8) (Marinobacter aquaeolei).